Here is a 231-residue protein sequence, read N- to C-terminus: Large ribosomal subunit protein uL1 (231 aa).

Belongs to the universal ribosomal protein uL1 family. As to quaternary structure, part of the 50S ribosomal subunit.

Functionally, binds directly to 23S rRNA. The L1 stalk is quite mobile in the ribosome, and is involved in E site tRNA release. Protein L1 is also a translational repressor protein, it controls the translation of the L11 operon by binding to its mRNA. The sequence is that of Large ribosomal subunit protein uL1 from Kosmotoga olearia (strain ATCC BAA-1733 / DSM 21960 / TBF 19.5.1).